The sequence spans 95 residues: Stationary phase-expressed protein 1 (95 aa).

A helical transmembrane segment spans residues 20–38; it reads FRYIMLGLVGAAVVPTAYM.

The protein resides in the mitochondrion membrane. The chain is Stationary phase-expressed protein 1 (SPG1) from Saccharomyces cerevisiae (strain RM11-1a) (Baker's yeast).